A 428-amino-acid polypeptide reads, in one-letter code: C4-dicarboxylate transport protein (428 aa).

The next 8 membrane-spanning stretches (helical) occupy residues 8–28, 44–64, 76–96, 142–162, 184–206, 222–242, 326–346, and 352–372; these read SLYF…HFYP, LIKM…IAGM, VALL…LIIV, IGAF…LFGF, VIFG…AMAF, LIIC…GSIA, IVHQ…AAGV, and IVLA…LALI.

The protein belongs to the dicarboxylate/amino acid:cation symporter (DAACS) (TC 2.A.23) family.

The protein localises to the cell inner membrane. In terms of biological role, responsible for the transport of dicarboxylates such as succinate, fumarate, and malate from the periplasm across the membrane. This chain is C4-dicarboxylate transport protein, found in Shigella flexneri.